The primary structure comprises 101 residues: Small ribosomal subunit protein uS14 (101 aa).

The protein belongs to the universal ribosomal protein uS14 family. As to quaternary structure, part of the 30S ribosomal subunit. Contacts proteins S3 and S10.

Functionally, binds 16S rRNA, required for the assembly of 30S particles and may also be responsible for determining the conformation of the 16S rRNA at the A site. The chain is Small ribosomal subunit protein uS14 from Shewanella frigidimarina (strain NCIMB 400).